We begin with the raw amino-acid sequence, 256 residues long: Enolase-phosphatase E1 (256 aa).

Mg(2+) is bound by residues aspartate 14 and glutamate 16. Residues 142 to 143 and lysine 176 contribute to the substrate site; that span reads SS. Aspartate 201 is a Mg(2+) binding site.

This sequence belongs to the HAD-like hydrolase superfamily. MasA/MtnC family. Monomer. The cofactor is Mg(2+).

It localises to the cytoplasm. The protein resides in the nucleus. The enzyme catalyses 5-methylsulfanyl-2,3-dioxopentyl phosphate + H2O = 1,2-dihydroxy-5-(methylsulfanyl)pent-1-en-3-one + phosphate. It participates in amino-acid biosynthesis; L-methionine biosynthesis via salvage pathway; L-methionine from S-methyl-5-thio-alpha-D-ribose 1-phosphate: step 3/6. It functions in the pathway amino-acid biosynthesis; L-methionine biosynthesis via salvage pathway; L-methionine from S-methyl-5-thio-alpha-D-ribose 1-phosphate: step 4/6. In terms of biological role, bifunctional enzyme that catalyzes the enolization of 2,3-diketo-5-methylthiopentyl-1-phosphate (DK-MTP-1-P) into the intermediate 2-hydroxy-3-keto-5-methylthiopentenyl-1-phosphate (HK-MTPenyl-1-P), which is then dephosphorylated to form the acireductone 1,2-dihydroxy-3-keto-5-methylthiopentene (DHK-MTPene). This Drosophila erecta (Fruit fly) protein is Enolase-phosphatase E1.